The primary structure comprises 518 residues: Major facilitator superfamily multidrug transporter mfsC (518 aa).

Transmembrane regions (helical) follow at residues 27 to 47, 65 to 85, 88 to 108, 123 to 143, 152 to 172, 183 to 203, and 212 to 232; these read VLLTTTVVNFLDLFQLSSVLF, WVLIVYNITFAAFLLIAGQLG, FGLEKIFIAGTATLTISNVIN, ISGVGAGLTAPNGLAILSNTF, ALAIYTACGPLGSTIGTVVGS, IFWLCLILTGLSTILACLFLP, and PIDIPGTVVFTAGVALLVYGL. A glycan (N-linked (GlcNAc...) asparagine) is linked at Asn-233. Helical transmembrane passes span 242–262, 281–301, 315–335, 347–367, 380–400, 409–429, and 455–475; these read SAAMLTGIILGVCLLFVFLWV, FLVMLVAIFAFGGSFSTWFFI, ILTAVYFLPAAFAAIASGVFA, ILVAGLAITAAGAVAWAFAGP, TAIIFVIGSPVALVPTQSILL, AVAGALFNTAYQVGASVILAG, and AFWLIAGVLGAAALTVMVCYW.

The protein belongs to the major facilitator superfamily. EmrB family.

It is found in the membrane. Major facilitator superfamily transporter that may be involved in A.fumigatus adaptation to azoles such as vorizonazole. The sequence is that of Major facilitator superfamily multidrug transporter mfsC from Aspergillus fumigatus (strain ATCC MYA-4609 / CBS 101355 / FGSC A1100 / Af293) (Neosartorya fumigata).